The primary structure comprises 255 residues: 5-oxoprolinase subunit A (255 aa).

It belongs to the LamB/PxpA family. Forms a complex composed of PxpA, PxpB and PxpC.

The enzyme catalyses 5-oxo-L-proline + ATP + 2 H2O = L-glutamate + ADP + phosphate + H(+). Its function is as follows. Catalyzes the cleavage of 5-oxoproline to form L-glutamate coupled to the hydrolysis of ATP to ADP and inorganic phosphate. The sequence is that of 5-oxoprolinase subunit A from Pyrococcus abyssi (strain GE5 / Orsay).